The following is a 279-amino-acid chain: Prostatic spermine-binding protein (279 aa).

Positions 1-17 (MLLLVTLALLAGPTCRA) are cleaved as a signal peptide. The residue at position 18 (Gln-18) is a Pyrrolidone carboxylic acid. Residues 18–151 (QNILGNNVGT…LNGMGFKWKN (134 aa)) enclose the Jacalin-type lectin domain. Asn-62 carries an N-linked (GlcNAc...) asparagine glycan. Acidic residues-rich tracts occupy residues 160-177 (DDDK…NEED) and 185-279 (NDHD…EEEE). Residues 160–279 (DDDKEDDDDE…DDDNGDEEEE (120 aa)) are disordered.

The protein to mouse SBP. In terms of tissue distribution, prostate.

Its function is as follows. Spermine-binding protein is an androgen regulated ventral prostate glycoprotein that binds various polyamines. The protein is Prostatic spermine-binding protein (Sbp) of Rattus norvegicus (Rat).